A 695-amino-acid polypeptide reads, in one-letter code: Elongation factor G 1 (695 aa).

The 279-residue stretch at 6–284 (KKVRNIGISA…VTRYLPCPAD (279 aa)) folds into the tr-type G domain. Residues 15 to 22 (AHIDSGKT), 82 to 86 (DTPGH), and 136 to 139 (NKCD) each bind GTP.

It belongs to the TRAFAC class translation factor GTPase superfamily. Classic translation factor GTPase family. EF-G/EF-2 subfamily.

It is found in the cytoplasm. Catalyzes the GTP-dependent ribosomal translocation step during translation elongation. During this step, the ribosome changes from the pre-translocational (PRE) to the post-translocational (POST) state as the newly formed A-site-bound peptidyl-tRNA and P-site-bound deacylated tRNA move to the P and E sites, respectively. Catalyzes the coordinated movement of the two tRNA molecules, the mRNA and conformational changes in the ribosome. The protein is Elongation factor G 1 of Syntrophus aciditrophicus (strain SB).